A 94-amino-acid chain; its full sequence is Co-chaperonin GroES (94 aa).

The protein belongs to the GroES chaperonin family. In terms of assembly, heptamer of 7 subunits arranged in a ring. Interacts with the chaperonin GroEL.

It localises to the cytoplasm. Its function is as follows. Together with the chaperonin GroEL, plays an essential role in assisting protein folding. The GroEL-GroES system forms a nano-cage that allows encapsulation of the non-native substrate proteins and provides a physical environment optimized to promote and accelerate protein folding. GroES binds to the apical surface of the GroEL ring, thereby capping the opening of the GroEL channel. This chain is Co-chaperonin GroES, found in Clostridioides difficile (strain 630) (Peptoclostridium difficile).